The chain runs to 777 residues: Serine/threonine-protein kinase PLK4 (777 aa).

One can recognise a Protein kinase domain in the interval 14–268 (YEVQHLLGKG…LEQVLRHPFL (255 aa)). ATP contacts are provided by residues 20 to 28 (LGKGGFASV) and K43. D139 acts as the Proton acceptor in catalysis. Over residues 371-381 (TNNLAPFTSDS) the composition is skewed to polar residues. The interval 371–390 (TNNLAPFTSDSDMIPSPVGE) is disordered. The 118-residue stretch at 390–507 (EKRLLMPPLE…ARFVGLVKSK (118 aa)) folds into the Cryptic POLO box 1 (CPB1) domain. One can recognise a Cryptic POLO box 2 (CPB2) domain in the interval 508–611 (TPKITFFSSL…GRRPAADMHA (104 aa)). Residues 669–748 (PIKRITVPEI…MPQLQMKLKC (80 aa)) enclose the POLO box domain.

This sequence belongs to the protein kinase superfamily. Ser/Thr protein kinase family. CDC5/Polo subfamily. In terms of assembly, homodimer. Ubiquitinated by the SCF(Slimb) ubiquitin ligase complex; leading to its degradation by the proteasome during interphase and regulating centriole number and ensuring the block to centriole reduplication.

The protein resides in the cytoplasm. It is found in the cytoskeleton. It localises to the microtubule organizing center. Its subcellular location is the centrosome. The protein localises to the centriole. It carries out the reaction L-seryl-[protein] + ATP = O-phospho-L-seryl-[protein] + ADP + H(+). It catalyses the reaction L-threonyl-[protein] + ATP = O-phospho-L-threonyl-[protein] + ADP + H(+). Serine/threonine-protein kinase that plays a central role in centriole duplication. Able to trigger procentriole formation on the surface of the mother centriole cylinder, using mother centriole as a platform, leading to the recruitment of centriole biogenesis proteins such as sas-6. When overexpressed, it is able to induce centrosome amplification through the simultaneous generation of multiple procentrioles adjoining each parental centriole during S phase. Centrosome amplification following overexpression can initiate tumorigenesis, highlighting the importance of centrosome regulation in cancers. This is Serine/threonine-protein kinase PLK4 (SAK) from Drosophila persimilis (Fruit fly).